A 616-amino-acid polypeptide reads, in one-letter code: MPKYRSATTTHGRNMAGARALWRATGMTDADFGKPIIAVVNSFTQFVPGHVHLRDLGKLVAEQIEAAGGVAKEFNTIAVDDGIAMGHGGMLYSLPSRELIADSVEYMVNAHCADAMVCISNCDKITPGMLMASLRLNIPVIFVSGGPMEAGKTKLSDQIIKLDLVDAMIQGADPKVSDSQSDQVERSACPTCGSCSGMFTANSMNCLTEALGLSQPGNGSLLATHADRKQLFLNAGKRIVELTKRYYEQNDESALPRNIASKAAFENAMTLDIAMGGSTNTVLHLLAAAQEAEIDFTMSDIDKLSRKVPQLCKVAPSTQKYHMEDVHRAGGVIGILGELDRAGLLNRDVKNVLGLTLPQTLEQYDVMLTQDDAVKNMFRAGPAGIRTTQAFSQDCRWDTLDDDRANGCIRSLEHAYSKDGGLAVLYGNFAENGCIVKTAGVDDSILKFTGPAKVYESQDDAVEAILGGKVVAGDVVVIRYEGPKGGPGMQEMLYPTSFLKSMGLGKACALITDGRFSGGTSGLSIGHVSPEAASGGSIGLIEDGDLIAIDIPNRGIQLQVSDAELAARREAQDARGDKAWTPKNRERQVSFALRAYASLATSADKGAVRDKSKLGG.

Asp81 lines the Mg(2+) pocket. Residue Cys122 coordinates [2Fe-2S] cluster. Asp123 and Lys124 together coordinate Mg(2+). Lys124 carries the N6-carboxylysine modification. A [2Fe-2S] cluster-binding site is contributed by Cys195. Mg(2+) is bound at residue Glu491. Ser517 serves as the catalytic Proton acceptor.

It belongs to the IlvD/Edd family. As to quaternary structure, homodimer. It depends on [2Fe-2S] cluster as a cofactor. Requires Mg(2+) as cofactor.

The catalysed reaction is (2R)-2,3-dihydroxy-3-methylbutanoate = 3-methyl-2-oxobutanoate + H2O. It carries out the reaction (2R,3R)-2,3-dihydroxy-3-methylpentanoate = (S)-3-methyl-2-oxopentanoate + H2O. Its pathway is amino-acid biosynthesis; L-isoleucine biosynthesis; L-isoleucine from 2-oxobutanoate: step 3/4. It participates in amino-acid biosynthesis; L-valine biosynthesis; L-valine from pyruvate: step 3/4. Functions in the biosynthesis of branched-chain amino acids. Catalyzes the dehydration of (2R,3R)-2,3-dihydroxy-3-methylpentanoate (2,3-dihydroxy-3-methylvalerate) into 2-oxo-3-methylpentanoate (2-oxo-3-methylvalerate) and of (2R)-2,3-dihydroxy-3-methylbutanoate (2,3-dihydroxyisovalerate) into 2-oxo-3-methylbutanoate (2-oxoisovalerate), the penultimate precursor to L-isoleucine and L-valine, respectively. The chain is Dihydroxy-acid dehydratase from Escherichia coli (strain K12 / MC4100 / BW2952).